The following is a 564-amino-acid chain: Arginine--tRNA ligase (564 aa).

Residues 136–146 (ANPTGPLHMGN) carry the 'HIGH' region motif.

The protein belongs to the class-I aminoacyl-tRNA synthetase family. In terms of assembly, monomer.

Its subcellular location is the cytoplasm. It catalyses the reaction tRNA(Arg) + L-arginine + ATP = L-arginyl-tRNA(Arg) + AMP + diphosphate. This is Arginine--tRNA ligase from Acetivibrio thermocellus (strain ATCC 27405 / DSM 1237 / JCM 9322 / NBRC 103400 / NCIMB 10682 / NRRL B-4536 / VPI 7372) (Clostridium thermocellum).